A 447-amino-acid polypeptide reads, in one-letter code: C4-dicarboxylate transport protein (447 aa).

10 helical membrane passes run 21-41, 57-77, 92-112, 141-161, 163-183, 201-221, 232-252, 320-340, 345-365, and 368-388; these read HLYV…YFAP, LVKM…IAGM, IYFL…VNIV, SLIG…LASG, ILQV…VGEA, LVAI…AYTV, LAML…IVLG, IYMT…LSWG, LLAV…AGFV, and AATL…IFGV.

It belongs to the dicarboxylate/amino acid:cation symporter (DAACS) (TC 2.A.23) family.

Its subcellular location is the cell inner membrane. Its function is as follows. Responsible for the transport of dicarboxylates such as succinate, fumarate, and malate from the periplasm across the membrane. The chain is C4-dicarboxylate transport protein from Granulibacter bethesdensis (strain ATCC BAA-1260 / CGDNIH1).